A 456-amino-acid chain; its full sequence is Bifunctional protein GlmU (456 aa).

A pyrophosphorylase region spans residues 1 to 229 (MLNNAMSVVI…LSEVEGVNNR (229 aa)). UDP-N-acetyl-alpha-D-glucosamine contacts are provided by residues 11-14 (LAAG), Lys25, Gln76, 81-82 (GT), 103-105 (YGD), Gly140, Glu154, Asn169, and Asn227. Asp105 lines the Mg(2+) pocket. A Mg(2+)-binding site is contributed by Asn227. The interval 230–250 (LQLSRLERVYQSEQAEKLLLA) is linker. Positions 251–456 (GVMLRDPARF…EGWRRPVKKK (206 aa)) are N-acetyltransferase. UDP-N-acetyl-alpha-D-glucosamine is bound by residues Arg333 and Lys351. Catalysis depends on His363, which acts as the Proton acceptor. Residues Tyr366 and Asn377 each coordinate UDP-N-acetyl-alpha-D-glucosamine. Residues Ala380, 386 to 387 (NY), Ser405, Ala423, and Arg440 contribute to the acetyl-CoA site.

It in the N-terminal section; belongs to the N-acetylglucosamine-1-phosphate uridyltransferase family. This sequence in the C-terminal section; belongs to the transferase hexapeptide repeat family. In terms of assembly, homotrimer. Mg(2+) serves as cofactor.

It is found in the cytoplasm. The catalysed reaction is alpha-D-glucosamine 1-phosphate + acetyl-CoA = N-acetyl-alpha-D-glucosamine 1-phosphate + CoA + H(+). It catalyses the reaction N-acetyl-alpha-D-glucosamine 1-phosphate + UTP + H(+) = UDP-N-acetyl-alpha-D-glucosamine + diphosphate. It participates in nucleotide-sugar biosynthesis; UDP-N-acetyl-alpha-D-glucosamine biosynthesis; N-acetyl-alpha-D-glucosamine 1-phosphate from alpha-D-glucosamine 6-phosphate (route II): step 2/2. Its pathway is nucleotide-sugar biosynthesis; UDP-N-acetyl-alpha-D-glucosamine biosynthesis; UDP-N-acetyl-alpha-D-glucosamine from N-acetyl-alpha-D-glucosamine 1-phosphate: step 1/1. The protein operates within bacterial outer membrane biogenesis; LPS lipid A biosynthesis. Catalyzes the last two sequential reactions in the de novo biosynthetic pathway for UDP-N-acetylglucosamine (UDP-GlcNAc). The C-terminal domain catalyzes the transfer of acetyl group from acetyl coenzyme A to glucosamine-1-phosphate (GlcN-1-P) to produce N-acetylglucosamine-1-phosphate (GlcNAc-1-P), which is converted into UDP-GlcNAc by the transfer of uridine 5-monophosphate (from uridine 5-triphosphate), a reaction catalyzed by the N-terminal domain. The sequence is that of Bifunctional protein GlmU from Escherichia coli O127:H6 (strain E2348/69 / EPEC).